A 232-amino-acid chain; its full sequence is ATP synthase subunit a (232 aa).

Helical transmembrane passes span 18 to 38 (LLFI…IAFI), 74 to 94 (WAGL…LGLF), 107 to 127 (TYSL…YLAF), 142 to 162 (ALIP…PIAL), 173 to 193 (GHLL…SLMV), and 195 to 215 (SIPI…VACI).

This sequence belongs to the ATPase A chain family. F-type ATPases have 2 components, CF(1) - the catalytic core - and CF(0) - the membrane proton channel. CF(1) has five subunits: alpha(3), beta(3), gamma(1), delta(1), epsilon(1). CF(0) has three main subunits: a, b and c.

It is found in the mitochondrion inner membrane. Functionally, mitochondrial membrane ATP synthase (F(1)F(0) ATP synthase or Complex V) produces ATP from ADP in the presence of a proton gradient across the membrane which is generated by electron transport complexes of the respiratory chain. F-type ATPases consist of two structural domains, F(1) - containing the extramembraneous catalytic core and F(0) - containing the membrane proton channel, linked together by a central stalk and a peripheral stalk. During catalysis, ATP synthesis in the catalytic domain of F(1) is coupled via a rotary mechanism of the central stalk subunits to proton translocation. Key component of the proton channel; it may play a direct role in the translocation of protons across the membrane. In Paracentrotus lividus (Common sea urchin), this protein is ATP synthase subunit a (ATP6).